Here is a 146-residue protein sequence, read N- to C-terminus: D-aminoacyl-tRNA deacylase (146 aa).

A Gly-cisPro motif, important for rejection of L-amino acids motif is present at residues 137–138 (GP).

This sequence belongs to the DTD family. As to quaternary structure, homodimer.

Its subcellular location is the cytoplasm. It catalyses the reaction glycyl-tRNA(Ala) + H2O = tRNA(Ala) + glycine + H(+). It carries out the reaction a D-aminoacyl-tRNA + H2O = a tRNA + a D-alpha-amino acid + H(+). Its function is as follows. An aminoacyl-tRNA editing enzyme that deacylates mischarged D-aminoacyl-tRNAs. Also deacylates mischarged glycyl-tRNA(Ala), protecting cells against glycine mischarging by AlaRS. Acts via tRNA-based rather than protein-based catalysis; rejects L-amino acids rather than detecting D-amino acids in the active site. By recycling D-aminoacyl-tRNA to D-amino acids and free tRNA molecules, this enzyme counteracts the toxicity associated with the formation of D-aminoacyl-tRNA entities in vivo and helps enforce protein L-homochirality. This Bacillus thuringiensis (strain Al Hakam) protein is D-aminoacyl-tRNA deacylase.